The following is a 364-amino-acid chain: Heavy metal-associated isoprenylated plant protein 35 (364 aa).

The segment covering 1-12 (MATDEMKSETKK) has biased composition (basic and acidic residues). A disordered region spans residues 1 to 33 (MATDEMKSETKKTEHKQKQSTQIKQDLPPPTIP). Positions 39–102 (YKSCTLKVSI…KLNKAGKNAE (64 aa)) constitute an HMA domain. A metal cation-binding residues include Cys50 and Cys53. The disordered stretch occupies residues 101–265 (AEQLPEIPDP…PPTATDYDRP (165 aa)). Over residues 111-122 (VDNKPKPVDPKE) the composition is skewed to basic and acidic residues. Over residues 134–144 (QITNEATSSGI) the composition is skewed to polar residues. Basic and acidic residues-rich tracts occupy residues 154-169 (ECDK…EKCL) and 180-198 (VKEE…KEES). The span at 237–253 (SLATTNNPTDGPARTQS) shows a compositional bias: polar residues. Position 361 is a cysteine methyl ester (Cys361). Cys361 carries the S-farnesyl cysteine lipid modification. A propeptide spans 362–364 (AIM) (removed in mature form).

Belongs to the HIPP family.

Functionally, heavy-metal-binding protein. This is Heavy metal-associated isoprenylated plant protein 35 from Arabidopsis thaliana (Mouse-ear cress).